The primary structure comprises 65 residues: SPbeta prophage-derived uncharacterized protein YopU (65 aa).

The sequence is that of SPbeta prophage-derived uncharacterized protein YopU (yopU) from Bacillus subtilis (strain 168).